A 377-amino-acid polypeptide reads, in one-letter code: Phospho-N-acetylmuramoyl-pentapeptide-transferase (377 aa).

A run of 10 helical transmembrane segments spans residues 2–22 (IQLL…TPAL), 55–75 (VAIL…SVLA), 82–102 (ITLS…VGFL), 122–142 (MVLQ…FPDA), 162–182 (LAFA…NLIA), 195–215 (LDGL…LITL), 236–256 (PMDL…FLWW), 263–283 (IFMG…FAVL), 288–308 (LLLV…ILQV), and 343–363 (FWVI…GDWL).

This sequence belongs to the glycosyltransferase 4 family. MraY subfamily. Requires Mg(2+) as cofactor.

It localises to the cell membrane. It catalyses the reaction UDP-N-acetyl-alpha-D-muramoyl-L-alanyl-gamma-D-glutamyl-meso-2,6-diaminopimeloyl-D-alanyl-D-alanine + di-trans,octa-cis-undecaprenyl phosphate = di-trans,octa-cis-undecaprenyl diphospho-N-acetyl-alpha-D-muramoyl-L-alanyl-D-glutamyl-meso-2,6-diaminopimeloyl-D-alanyl-D-alanine + UMP. The protein operates within cell wall biogenesis; peptidoglycan biosynthesis. In terms of biological role, catalyzes the initial step of the lipid cycle reactions in the biosynthesis of the cell wall peptidoglycan: transfers peptidoglycan precursor phospho-MurNAc-pentapeptide from UDP-MurNAc-pentapeptide onto the lipid carrier undecaprenyl phosphate, yielding undecaprenyl-pyrophosphoryl-MurNAc-pentapeptide, known as lipid I. This is Phospho-N-acetylmuramoyl-pentapeptide-transferase from Kocuria rhizophila (strain ATCC 9341 / DSM 348 / NBRC 103217 / DC2201).